A 543-amino-acid chain; its full sequence is Excitatory amino acid transporter 1 (543 aa).

Topologically, residues 1-47 (MTKSNGEEPRMGSRMERFQQGVRKRTLLAKKKVQNITKEDVKSYLFR) are cytoplasmic. A helical membrane pass occupies residues 48 to 68 (NAFVLLTVSAVIVGTILGFAL). The Extracellular portion of the chain corresponds to 69–86 (RPYKMSYREVKYFSFPGE). The helical transmembrane segment at 87 to 108 (LLMRMLQMLVLPLIISSLVTGM) threads the bilayer. Residues 109-122 (AALDSKASGKMGMR) are Cytoplasmic-facing. Residues 123–145 (AVVYYMTTTIIAVVIGIIIVIII) traverse the membrane as a helical segment. Residues 146–236 (HPGKGTKENM…IREEMVPVPG (91 aa)) lie on the Extracellular side of the membrane. The chain crosses the membrane as a helical span at residues 237–260 (SVNGVNALGLVVFSMCFGFVIGNM). At 261–269 (KEQGQALRE) the chain is on the cytoplasmic side. Residues 270 to 297 (FFDSLNEAIMRLVAVIMWYAPLGILFLI) form a helical membrane-spanning segment. Residues 298–318 (AGKILEMEDMGVIGGQLAMYT) lie on the Extracellular side of the membrane. A helical transmembrane segment spans residues 319–340 (VTVIVGLLIHAVIVLPLLYFLV). The Cytoplasmic portion of the chain corresponds to 341–345 (TRKNP). An intramembrane region (discontinuously helical) is located at residues 346–376 (WVFIGGLLQALITALGTSSSSATLPITFKCL). An L-aspartate-binding site is contributed by 363–365 (SSS). Residues 377-385 (EENNGVDKR) lie on the Cytoplasmic side of the membrane. A helical transmembrane segment spans residues 386-412 (ITRFVLPVGATINMDGTALYEALAAIF). 3 residues coordinate Na(+): G394, T396, and N398. T402 serves as a coordination point for L-aspartate. Topologically, residues 413-425 (IAQVNNFDLNFGQ) are extracellular. The discontinuously helical intramembrane region spans 426–459 (IITISITATAASIGAAGIPQAGLVTMVIVLTSVG). 443-447 (IPQAG) lines the L-aspartate pocket. Residues 460–472 (LPTDDITLIIAVD) are Extracellular-facing. Residues 473 to 494 (WFLDRLRTTTNVLGDSLGAGIV) form a helical membrane-spanning segment. L-aspartate contacts are provided by D476 and N483. N483 and D487 together coordinate Na(+). The Cytoplasmic segment spans residues 495-543 (EHLSRHELKNRDVEMGNSVIEENEMKKPYQLIAQDNEPEKPVADSETKM). A Phosphoserine modification is found at S512. Residues 522 to 543 (PYQLIAQDNEPEKPVADSETKM) are disordered. The segment covering 531 to 543 (EPEKPVADSETKM) has biased composition (basic and acidic residues).

The protein belongs to the dicarboxylate/amino acid:cation symporter (DAACS) (TC 2.A.23) family. SLC1A3 subfamily. Homotrimer. Post-translationally, glycosylated. Detected in brain and cerebellum. Both isoform GLAST-1 and GLAST-1A are expressed in bone and brain. In brain isoform GLAST-1 is highly enriched in the Purkinje cell layer in cerebellum.

The protein localises to the cell membrane. The catalysed reaction is K(+)(in) + L-glutamate(out) + 3 Na(+)(out) + H(+)(out) = K(+)(out) + L-glutamate(in) + 3 Na(+)(in) + H(+)(in). It carries out the reaction K(+)(in) + L-aspartate(out) + 3 Na(+)(out) + H(+)(out) = K(+)(out) + L-aspartate(in) + 3 Na(+)(in) + H(+)(in). It catalyses the reaction D-aspartate(out) + K(+)(in) + 3 Na(+)(out) + H(+)(out) = D-aspartate(in) + K(+)(out) + 3 Na(+)(in) + H(+)(in). In terms of biological role, sodium-dependent, high-affinity amino acid transporter that mediates the uptake of L-glutamate and also L-aspartate and D-aspartate. Functions as a symporter that transports one amino acid molecule together with two or three Na(+) ions and one proton, in parallel with the counter-transport of one K(+) ion. Plays a redundant role in the rapid removal of released glutamate from the synaptic cleft, which is essential for terminating the postsynaptic action of glutamate. The polypeptide is Excitatory amino acid transporter 1 (Slc1a3) (Rattus norvegicus (Rat)).